The primary structure comprises 612 residues: Putative zinc metalloproteinase C607.06c (612 aa).

His303 is a Zn(2+) binding site. Residue Glu304 is part of the active site. Positions 307 and 313 each coordinate Zn(2+). Residues 477–612 (VYRSERYGLR…FMDSIGFFIK (136 aa)) form the Jacalin-type lectin domain.

Belongs to the peptidase M10B family. Zn(2+) is required as a cofactor.

This Schizosaccharomyces pombe (strain 972 / ATCC 24843) (Fission yeast) protein is Putative zinc metalloproteinase C607.06c.